Reading from the N-terminus, the 1179-residue chain is DNA-directed RNA polymerase subunit beta' (1179 aa).

Zn(2+) contacts are provided by C60, C62, C75, and C78. 3 residues coordinate Mg(2+): D449, D451, and D453. 4 residues coordinate Zn(2+): C796, C871, C878, and C881.

Belongs to the RNA polymerase beta' chain family. The RNAP catalytic core consists of 2 alpha, 1 beta, 1 beta' and 1 omega subunit. When a sigma factor is associated with the core the holoenzyme is formed, which can initiate transcription. It depends on Mg(2+) as a cofactor. Zn(2+) is required as a cofactor.

It carries out the reaction RNA(n) + a ribonucleoside 5'-triphosphate = RNA(n+1) + diphosphate. DNA-dependent RNA polymerase catalyzes the transcription of DNA into RNA using the four ribonucleoside triphosphates as substrates. The sequence is that of DNA-directed RNA polymerase subunit beta' from Symbiobacterium thermophilum (strain DSM 24528 / JCM 14929 / IAM 14863 / T).